A 213-amino-acid polypeptide reads, in one-letter code: Large ribosomal subunit protein uL3 (213 aa).

Belongs to the universal ribosomal protein uL3 family. As to quaternary structure, part of the 50S ribosomal subunit. Forms a cluster with proteins L14 and L19.

In terms of biological role, one of the primary rRNA binding proteins, it binds directly near the 3'-end of the 23S rRNA, where it nucleates assembly of the 50S subunit. This chain is Large ribosomal subunit protein uL3, found in Bifidobacterium longum subsp. infantis (strain ATCC 15697 / DSM 20088 / JCM 1222 / NCTC 11817 / S12).